The chain runs to 981 residues: Lateral signaling target protein 2 homolog (981 aa).

The disordered stretch occupies residues 308–462 (PLGSSSIEAP…LESSDDDTDE (155 aa)). Composition is skewed to low complexity over residues 326 to 356 (TTSS…TTNT), 369 to 380 (NNHNSNSNSSTN), 390 to 404 (SPSM…TPTA), and 412 to 433 (PSHS…PADW). Acidic residues predominate over residues 434–462 (SDGDDEDEDDDDIEVDEEDLESSDDDTDE). A phosphoserine mark is found at S544 and S545. Disordered stretches follow at residues 561–642 (EQMQ…SSLS) and 749–897 (DNVF…SPPA). Residues 576–611 (HSHRHHQRHHHHHHHRHSHQHRQPHPHRTTRSGRKR) show a composition bias toward basic residues. Low complexity predominate over residues 630–642 (LASGDTSAASSLS). Residues 760–791 (ATGQRHSAGASMQRNNTIDLASQSGEGSPSGA) show a composition bias toward polar residues. Position 805 is a phosphoserine (S805). Composition is skewed to low complexity over residues 811 to 866 (AASS…PVSA) and 883 to 896 (PSSA…LSPP). Residues 901–961 (DGKAPRCMAC…VCRDCYVREV (61 aa)) form an FYVE-type zinc finger. Zn(2+)-binding residues include C907, C910, C923, C926, C931, C934, C953, and C956.

This sequence belongs to the lst-2 family.

Its function is as follows. Negative regulator of epidermal growth factor receptor (EGFR) signaling. The polypeptide is Lateral signaling target protein 2 homolog (Drosophila erecta (Fruit fly)).